The chain runs to 218 residues: Guanylate kinase (218 aa).

One can recognise a Guanylate kinase-like domain in the interval 14-193 (GLMLVLSSPS…AFAEVRGIVV (180 aa)). 21–28 (SPSGAGKS) serves as a coordination point for ATP.

This sequence belongs to the guanylate kinase family.

The protein resides in the cytoplasm. The catalysed reaction is GMP + ATP = GDP + ADP. In terms of biological role, essential for recycling GMP and indirectly, cGMP. The chain is Guanylate kinase (gmk) from Mesorhizobium japonicum (strain LMG 29417 / CECT 9101 / MAFF 303099) (Mesorhizobium loti (strain MAFF 303099)).